The following is a 304-amino-acid chain: Undecaprenyl-diphosphatase (304 aa).

8 helical membrane-spanning segments follow: residues 5-25 (FLFI…EFVP), 47-67 (GFPE…VVVL), 72-92 (ISSS…LKAS), 111-131 (FGIN…LFHD), 137-157 (LFST…LIVI), 209-231 (ISGL…AMVG), 248-268 (TNLI…LVVI), and 282-302 (IFAI…FTKV).

The protein belongs to the UppP family.

The protein localises to the cell membrane. The catalysed reaction is di-trans,octa-cis-undecaprenyl diphosphate + H2O = di-trans,octa-cis-undecaprenyl phosphate + phosphate + H(+). Its function is as follows. Catalyzes the dephosphorylation of undecaprenyl diphosphate (UPP). Confers resistance to bacitracin. This chain is Undecaprenyl-diphosphatase, found in Clostridium perfringens (strain SM101 / Type A).